Consider the following 527-residue polypeptide: Acyl-coenzyme A thioesterase 4, mitochondrial (527 aa).

The transit peptide at M1–F75 directs the protein to the mitochondrion. HotDog ACOT-type domains are found at residues I172–K294 and K370–A487.

This sequence belongs to the acyl coenzyme A hydrolase family. In terms of tissue distribution, mostly expressed at low levels in glandular trichomes (lupulin glands), and, to a lower extent, in stems, leaves, flowers and cones.

Its subcellular location is the mitochondrion. It carries out the reaction 2-methylpropanoyl-CoA + H2O = 2-methylpropanoate + CoA + H(+). The catalysed reaction is propanoyl-CoA + H2O = propanoate + CoA + H(+). The enzyme catalyses octanoyl-CoA + H2O = octanoate + CoA + H(+). It catalyses the reaction butanoyl-CoA + H2O = butanoate + CoA + H(+). It carries out the reaction 3-methylbutanoyl-CoA + H2O = 3-methylbutanoate + CoA + H(+). The catalysed reaction is 2-methylbutanoyl-CoA + H2O = 2-methylbutanoate + CoA + H(+). In terms of biological role, acyl-CoA thioesterases are a group of enzymes that catalyze the hydrolysis of acyl-CoAs to the free fatty acid and coenzyme A (CoASH), providing the potential to regulate intracellular levels of acyl-CoAs, free fatty acids and CoASH. Active on acyl CoAs with short chains (propanoyl-CoA and butanoyl-CoA), branched short chains (2-methylpropanoyl-CoA, 2-methylbutanoyl-CoA and 3-methylbutanoyl-CoA) and medium chains (octanoyl-CoA). This chain is Acyl-coenzyme A thioesterase 4, mitochondrial, found in Humulus lupulus (European hop).